The primary structure comprises 763 residues: Phosphoglycerol transferase I (763 aa).

A run of 4 helical transmembrane segments spans residues 1 to 21 (MSEL…AWKA), 26 to 46 (WWFA…ITLF), 77 to 97 (ILPG…LGWI), and 108 to 128 (FGYS…SPAF).

This sequence belongs to the OpgB family.

The protein localises to the cell inner membrane. It catalyses the reaction a phosphatidylglycerol + a membrane-derived-oligosaccharide D-glucose = a 1,2-diacyl-sn-glycerol + a membrane-derived-oligosaccharide 6-(glycerophospho)-D-glucose.. It participates in glycan metabolism; osmoregulated periplasmic glucan (OPG) biosynthesis. Functionally, transfers a phosphoglycerol residue from phosphatidylglycerol to the membrane-bound nascent glucan backbones. In Escherichia coli O139:H28 (strain E24377A / ETEC), this protein is Phosphoglycerol transferase I.